The sequence spans 348 residues: Holliday junction branch migration complex subunit RuvB (348 aa).

Residues alanine 4 to tyrosine 184 are large ATPase domain (RuvB-L). ATP is bound by residues isoleucine 23, arginine 24, glycine 65, lysine 68, threonine 69, threonine 70, glutamate 131–phenylalanine 133, arginine 174, tyrosine 184, and arginine 221. Threonine 69 lines the Mg(2+) pocket. A small ATPAse domain (RuvB-S) region spans residues asparagine 185 to aspartate 255. The head domain (RuvB-H) stretch occupies residues glutamate 258–glutamate 348. Residues arginine 294, arginine 313, and arginine 318 each coordinate DNA.

The protein belongs to the RuvB family. As to quaternary structure, homohexamer. Forms an RuvA(8)-RuvB(12)-Holliday junction (HJ) complex. HJ DNA is sandwiched between 2 RuvA tetramers; dsDNA enters through RuvA and exits via RuvB. An RuvB hexamer assembles on each DNA strand where it exits the tetramer. Each RuvB hexamer is contacted by two RuvA subunits (via domain III) on 2 adjacent RuvB subunits; this complex drives branch migration. In the full resolvosome a probable DNA-RuvA(4)-RuvB(12)-RuvC(2) complex forms which resolves the HJ.

The protein resides in the cytoplasm. The catalysed reaction is ATP + H2O = ADP + phosphate + H(+). In terms of biological role, the RuvA-RuvB-RuvC complex processes Holliday junction (HJ) DNA during genetic recombination and DNA repair, while the RuvA-RuvB complex plays an important role in the rescue of blocked DNA replication forks via replication fork reversal (RFR). RuvA specifically binds to HJ cruciform DNA, conferring on it an open structure. The RuvB hexamer acts as an ATP-dependent pump, pulling dsDNA into and through the RuvAB complex. RuvB forms 2 homohexamers on either side of HJ DNA bound by 1 or 2 RuvA tetramers; 4 subunits per hexamer contact DNA at a time. Coordinated motions by a converter formed by DNA-disengaged RuvB subunits stimulates ATP hydrolysis and nucleotide exchange. Immobilization of the converter enables RuvB to convert the ATP-contained energy into a lever motion, pulling 2 nucleotides of DNA out of the RuvA tetramer per ATP hydrolyzed, thus driving DNA branch migration. The RuvB motors rotate together with the DNA substrate, which together with the progressing nucleotide cycle form the mechanistic basis for DNA recombination by continuous HJ branch migration. Branch migration allows RuvC to scan DNA until it finds its consensus sequence, where it cleaves and resolves cruciform DNA. This Pseudomonas putida (strain ATCC 700007 / DSM 6899 / JCM 31910 / BCRC 17059 / LMG 24140 / F1) protein is Holliday junction branch migration complex subunit RuvB.